The primary structure comprises 392 residues: MSCPMRSGFVDSVQGGHHLGSEAGMLYGEYLMLDKVLSAQRMLSVEGKKPVHDEHLFIVTHQAYELWFKQIIFELDSIRDLFSTEHIEESRTLEILKRLNRIVMILKLLVDQVPILETMTPLDFMDFRDYLSPASGFQSLQFRLLENKLGVKSEHRVKYNQKYTEVFASDPGAIERIGTTETEPSLADLVQKWLERTPGLEQDGFNFWGKFQESVEQLLAEQEASAMSEEHENVREYRLMDIDKRREVYKSIFDAQVHDALVARGERRFTHKALQGAIMITFYRDEPRFSQPHQLLMLLMDIDSLITKWRYNHVIMVQRMIGSQQLGTGGSSGYQYLRSTLSDRYKVFLDLFNLSTFLIPRQSIPPLTNEMQKALNLAWGSPAHFARNGSLH.

Substrate contacts are provided by residues 57-61 and Arg-128; that span reads FIVTH. His-313 serves as a coordination point for heme. Position 328 (Thr-328) interacts with substrate.

It belongs to the tryptophan 2,3-dioxygenase family. Homotetramer. Dimer of dimers. It depends on heme as a cofactor.

The catalysed reaction is L-tryptophan + O2 = N-formyl-L-kynurenine. It participates in amino-acid degradation; L-tryptophan degradation via kynurenine pathway; L-kynurenine from L-tryptophan: step 1/2. The protein operates within pigment biosynthesis; ommochrome biosynthesis. Functionally, heme-dependent dioxygenase that catalyzes the oxidative cleavage of the L-tryptophan (L-Trp) pyrrole ring and converts L-tryptophan to N-formyl-L-kynurenine. Catalyzes the oxidative cleavage of the indole moiety. This chain is Tryptophan 2,3-dioxygenase, found in Anopheles gambiae (African malaria mosquito).